Reading from the N-terminus, the 1820-residue chain is Sodium channel protein (1820 aa).

Residues 1-117 are Cytoplasmic-facing; the sequence is MARKFSSARP…FNPIRRGAIR (117 aa). One copy of the I repeat lies at 108-410; the sequence is FNPIRRGAIR…VAMAYEEQNQ (303 aa). A helical membrane pass occupies residues 118–138; that stretch reads VFVNSAFNFFIMFTIFSNCIF. At 139–149 the chain is on the extracellular side; that stretch reads MTISNPPAWSK. The chain crosses the membrane as a helical span at residues 150-171; sequence IVEYTFTGIYTFEVIVKVLSRG. Residues 172–176 are Cytoplasmic-facing; the sequence is FCIGH. A helical membrane pass occupies residues 177-197; the sequence is FTFLRDPWNWLDFSVVTMTYI. The Extracellular segment spans residues 198-203; sequence TEFIDL. The helical; Voltage-sensor transmembrane segment at 204–224 threads the bilayer; the sequence is RNVSALRTFRVLRALKTITIF. The Cytoplasmic segment spans residues 225-243; sequence PGLKTIVRALIESMKQMGD. Residues 244 to 264 traverse the membrane as a helical segment; sequence VVILTVFSLAVFTLAGMQLFM. Over 265 to 346 the chain is Extracellular; that stretch reads GNLRHKCIRW…PNYGYTNYDN (82 aa). The cysteines at positions 271 and 324 are disulfide-linked. Residues N278, N288, and N317 are each glycosylated (N-linked (GlcNAc...) asparagine). The interval 285–342 is non-homologous region of repeat I; sequence SAYNTTFDFTAYIENEENQYFLDGALDALLCGNNSDAGKCPEGYTCMKAGRNPNYGYT. Positions 347–371 form an intramembrane region, pore-forming; that stretch reads FAWTFLCLFRLMLQDYWENLYQMTL. The Extracellular segment spans residues 372–378; that stretch reads RAAGKSY. The helical transmembrane segment at 379–402 threads the bilayer; that stretch reads MVFFIMVIFLGSFYLINLILAVVA. The Cytoplasmic segment spans residues 403-557; sequence MAYEEQNQAT…CCGPWVFLKK (155 aa). Positions 483–507 are disordered; the sequence is SVKLSTEEQRSDSKSMDSKHSVDKP. Residues 487–507 show a composition bias toward basic and acidic residues; it reads STEEQRSDSKSMDSKHSVDKP. One copy of the II repeat lies at 548–811; the sequence is CCGPWVFLKK…EEDDEVNSLQ (264 aa). The chain crosses the membrane as a helical span at residues 558-578; it reads WVHFVMMDPFTDLFITLCIIL. At 579–599 the chain is on the extracellular side; the sequence is NTLFMSIEHHPMNESFQSLLS. A glycan (N-linked (GlcNAc...) asparagine) is linked at N591. A helical membrane pass occupies residues 600-620; it reads AGNLVFTTIFAAEMVLKIIAL. Residues 621–625 lie on the Cytoplasmic side of the membrane; sequence DPYYY. A helical transmembrane segment spans residues 626–643; sequence FQQTWNIFDSIIVSLSLL. Residues 644-650 lie on the Extracellular side of the membrane; sequence ELGLSNM. Residues 651-671 traverse the membrane as a helical; Voltage-sensor segment; that stretch reads QGMSVLRSLRLLRIFKLAKSW. Residues 672 to 690 lie on the Cytoplasmic side of the membrane; the sequence is PTLNILIKIICNSVGALGN. The helical transmembrane segment at 691-711 threads the bilayer; it reads LTIVLAIIVFIFALVGFQLFG. Over 712–734 the chain is Extracellular; sequence KNYKEYVCKISDDCELPRWHMND. An intramembrane region (pore-forming) is located at residues 735–755; it reads FFHSFLIVFRALCGEWIETMW. Topologically, residues 756-766 are extracellular; that stretch reads DCMEVGGVPMC. A disulfide bridge links C757 with C766. The helical transmembrane segment at 767–790 threads the bilayer; it reads LAVYMMVIIIGNLVMLNLFLALLL. Topologically, residues 791–1004 are cytoplasmic; that stretch reads SSFSSDNLSS…TIVEHDYFET (214 aa). Disordered regions lie at residues 844-864 and 891-959; these read PPSD…DTLP and VKGE…SKDP. Acidic residues predominate over residues 896 to 910; that stretch reads EIEEEGLVDSSDEED. The span at 924–935 shows a compositional bias: polar residues; it reads SVCSTVDYSPSE. The span at 942 to 953 shows a compositional bias: acidic residues; sequence EEEEEEEEEPEE. The III repeat unit spans residues 988 to 1295; it reads NLRRTCYTIV…KKYYNAMKKL (308 aa). The chain crosses the membrane as a helical span at residues 1005–1025; it reads FIIFMILLSSGVLAFEDIYIW. At 1026 to 1037 the chain is on the extracellular side; that stretch reads RRRVIKVILEYA. A helical membrane pass occupies residues 1038-1058; that stretch reads DKVFTYVFIVEMLLKWVAYGF. Topologically, residues 1059–1065 are cytoplasmic; sequence KRYFTDA. A helical transmembrane segment spans residues 1066-1086; it reads WCWLDFVIVGASIMGITSSLL. Over 1087 to 1091 the chain is Extracellular; it reads GYEEL. A helical; Voltage-sensor transmembrane segment spans residues 1092–1112; the sequence is GAIKNLRTIRALRPLRALSRF. The Cytoplasmic portion of the chain corresponds to 1113–1131; that stretch reads EGMKVVVRALLGAIPSIMN. A helical transmembrane segment spans residues 1132–1152; it reads VLLVCLMFWLIFSIMGVNLFA. Residues 1153 to 1199 lie on the Extracellular side of the membrane; that stretch reads GKFYRCINTTTDEILPVEEVNNRSDCMALMYTNEVRWVNLKVNYDNA. N-linked (GlcNAc...) asparagine glycans are attached at residues N1160 and N1174. A non-homologous region of repeat III region spans residues 1172–1194; that stretch reads VNNRSDCMALMYTNEVRWVNLKV. An intramembrane region (pore-forming) is located at residues 1200-1221; the sequence is GMGYLSLLQVSTFKGWMDIMYA. The Extracellular segment spans residues 1222 to 1243; that stretch reads AVDSREVEDQPIYEINVYMYLY. The chain crosses the membrane as a helical span at residues 1244 to 1264; the sequence is FVIFIVFGAFFTLNLFIGVII. Residues 1265 to 1320 lie on the Cytoplasmic side of the membrane; sequence DNFNRQKQKLGGEDLFMTEEQKKYYNAMKKLGSKKAAKCIPRPSNVVQGVVYDIVT. The stretch at 1304-1602 is one IV repeat; the sequence is IPRPSNVVQG…WHKFDVHGTQ (299 aa). The chain crosses the membrane as a helical span at residues 1321–1341; sequence QPFTDIFIMALICINMVAMMV. The Extracellular segment spans residues 1342–1352; it reads ESEDQSQVKKD. The helical transmembrane segment at 1353-1376 threads the bilayer; the sequence is ILSQINVIFVIIFTVECLLKLLAL. Topologically, residues 1377-1380 are cytoplasmic; sequence RQYF. A helical transmembrane segment spans residues 1381-1398; sequence FTVGWNVFDFAVVVISII. At 1399-1416 the chain is on the extracellular side; sequence GLLLSDIIEKYFVSPTLF. A helical; Voltage-sensor membrane pass occupies residues 1417 to 1437; sequence RVIRLARIARVLRLIRAAKGI. Topologically, residues 1438–1453 are cytoplasmic; sequence RTLLFALMMSLPALFN. Residues 1454-1474 form a helical membrane-spanning segment; sequence IGLLLFLIMFIFSIFGMSNFA. Residues 1475–1490 are Extracellular-facing; sequence YVKKQGGVDDIFNFET. Positions 1490 to 1505 are non-homologous region of repeat IV; the sequence is TFGNSMICLFEITTSA. Residues 1491 to 1513 constitute an intramembrane region (pore-forming); sequence FGNSMICLFEITTSAGWDGLLLP. Residues 1514-1543 are Extracellular-facing; that stretch reads TLNTGPPDCDPDVENPGTDVRGNCGNPGKG. A helical membrane pass occupies residues 1544–1567; sequence ITFFCSYIILSFLVVVNMYIAIIL. Residues 1568 to 1820 are Cytoplasmic-facing; the sequence is ENFGVAQEES…GAIVVRESIV (253 aa).

This sequence belongs to the sodium channel (TC 1.A.1.10) family.

Its subcellular location is the cell membrane. Functionally, mediates the voltage-dependent sodium ion permeability of excitable membranes. Assuming opened or closed conformations in response to the voltage difference across the membrane, the protein forms a sodium-selective channel through which Na(+) ions may pass in accordance with their electrochemical gradient. The polypeptide is Sodium channel protein (Electrophorus electricus (Electric eel)).